We begin with the raw amino-acid sequence, 306 residues long: Bifunctional protein FolD (306 aa).

Residues 169–171 (GRS), Ser-194, and Ile-235 each bind NADP(+).

This sequence belongs to the tetrahydrofolate dehydrogenase/cyclohydrolase family. Homodimer.

It catalyses the reaction (6R)-5,10-methylene-5,6,7,8-tetrahydrofolate + NADP(+) = (6R)-5,10-methenyltetrahydrofolate + NADPH. It carries out the reaction (6R)-5,10-methenyltetrahydrofolate + H2O = (6R)-10-formyltetrahydrofolate + H(+). The protein operates within one-carbon metabolism; tetrahydrofolate interconversion. Functionally, catalyzes the oxidation of 5,10-methylenetetrahydrofolate to 5,10-methenyltetrahydrofolate and then the hydrolysis of 5,10-methenyltetrahydrofolate to 10-formyltetrahydrofolate. This chain is Bifunctional protein FolD, found in Thermosynechococcus vestitus (strain NIES-2133 / IAM M-273 / BP-1).